Reading from the N-terminus, the 348-residue chain is L-seryl-tRNA(Sec) kinase (348 aa).

Residue 25 to 32 (GLPAAGKS) coordinates ATP.

It belongs to the L-seryl-tRNA(Sec) kinase family. Mg(2+) is required as a cofactor.

The catalysed reaction is L-seryl-tRNA(Sec) + ATP = O-phospho-L-seryl-tRNA(Sec) + ADP. It participates in aminoacyl-tRNA biosynthesis; selenocysteinyl-tRNA(Sec) biosynthesis; selenocysteinyl-tRNA(Sec) from L-seryl-tRNA(Sec) (archaeal/eukaryal route): step 1/2. In terms of biological role, specifically phosphorylates seryl-tRNA(Sec) to O-phosphoseryl-tRNA(Sec), an activated intermediate for selenocysteine biosynthesis. The sequence is that of L-seryl-tRNA(Sec) kinase (PSTK) from Homo sapiens (Human).